Here is a 246-residue protein sequence, read N- to C-terminus: Hsp70 nucleotide exchange factor fes-1 (246 aa).

The span at glutamine 23 to alanine 40 shows a compositional bias: polar residues. Residues glutamine 23–aspartate 63 form a disordered region. 4 ARM repeats span residues threonine 48 to proline 92, leucine 113 to glutamine 152, glutamine 155 to arginine 196, and histidine 214 to lysine 244.

It belongs to the FES1 family.

The protein localises to the cytoplasm. In terms of biological role, functions as a nucleotide exchange factor (NEF) for Hsp70 chaperones which accelerates the release of ADP. Required for fully efficient Hsp70-mediated folding of proteins. The sequence is that of Hsp70 nucleotide exchange factor fes-1 (fes-1) from Neurospora crassa (strain ATCC 24698 / 74-OR23-1A / CBS 708.71 / DSM 1257 / FGSC 987).